The sequence spans 160 residues: 2-C-methyl-D-erythritol 2,4-cyclodiphosphate synthase (160 aa).

A divalent metal cation contacts are provided by aspartate 11 and histidine 13. 4-CDP-2-C-methyl-D-erythritol 2-phosphate contacts are provided by residues 11 to 13 (DIH) and 37 to 38 (HS). Histidine 45 is an a divalent metal cation binding site. 4-CDP-2-C-methyl-D-erythritol 2-phosphate contacts are provided by residues 59-61 (DIG), 135-138 (TTNE), and arginine 145.

This sequence belongs to the IspF family. Homotrimer. Requires a divalent metal cation as cofactor.

The catalysed reaction is 4-CDP-2-C-methyl-D-erythritol 2-phosphate = 2-C-methyl-D-erythritol 2,4-cyclic diphosphate + CMP. It participates in isoprenoid biosynthesis; isopentenyl diphosphate biosynthesis via DXP pathway; isopentenyl diphosphate from 1-deoxy-D-xylulose 5-phosphate: step 4/6. Its function is as follows. Involved in the biosynthesis of isopentenyl diphosphate (IPP) and dimethylallyl diphosphate (DMAPP), two major building blocks of isoprenoid compounds. Catalyzes the conversion of 4-diphosphocytidyl-2-C-methyl-D-erythritol 2-phosphate (CDP-ME2P) to 2-C-methyl-D-erythritol 2,4-cyclodiphosphate (ME-CPP) with a corresponding release of cytidine 5-monophosphate (CMP). This Nostoc punctiforme (strain ATCC 29133 / PCC 73102) protein is 2-C-methyl-D-erythritol 2,4-cyclodiphosphate synthase.